A 100-amino-acid polypeptide reads, in one-letter code: Cytochrome b (100 aa).

A run of 3 helical transmembrane segments spans residues 1 to 21, 45 to 66, and 81 to 100; these read MGSL…FLAM, WLIR…YLHI, and WNIG…VGYV. Histidine 51 and histidine 65 together coordinate heme b.

Belongs to the cytochrome b family. In terms of assembly, the cytochrome bc1 complex contains 3 respiratory subunits (MT-CYB, CYC1 and UQCRFS1), 2 core proteins (UQCRC1 and UQCRC2) and probably 6 low-molecular weight proteins. Heme b is required as a cofactor.

It localises to the mitochondrion inner membrane. Functionally, component of the ubiquinol-cytochrome c reductase complex (complex III or cytochrome b-c1 complex) that is part of the mitochondrial respiratory chain. The b-c1 complex mediates electron transfer from ubiquinol to cytochrome c. Contributes to the generation of a proton gradient across the mitochondrial membrane that is then used for ATP synthesis. This chain is Cytochrome b (mt-cyb), found in Polypterus sp. (Bichir).